A 745-amino-acid polypeptide reads, in one-letter code: Phosphoribosylformylglycinamidine synthase subunit PurL (745 aa).

The active site involves His-47. ATP-binding residues include Tyr-50 and Lys-90. Residue Glu-92 coordinates Mg(2+). Residues 93–96 (SHNH) and Arg-115 each bind substrate. His-94 functions as the Proton acceptor in the catalytic mechanism. Mg(2+) is bound at residue Asp-116. A substrate-binding site is contributed by Gln-240. A Mg(2+)-binding site is contributed by Asp-268. 312–314 (ESQ) serves as a coordination point for substrate. Asn-501 and Gly-538 together coordinate ATP. Asn-539 lines the Mg(2+) pocket. Ser-541 contacts substrate.

Belongs to the FGAMS family. In terms of assembly, monomer. Part of the FGAM synthase complex composed of 1 PurL, 1 PurQ and 2 PurS subunits.

It is found in the cytoplasm. It catalyses the reaction N(2)-formyl-N(1)-(5-phospho-beta-D-ribosyl)glycinamide + L-glutamine + ATP + H2O = 2-formamido-N(1)-(5-O-phospho-beta-D-ribosyl)acetamidine + L-glutamate + ADP + phosphate + H(+). Its pathway is purine metabolism; IMP biosynthesis via de novo pathway; 5-amino-1-(5-phospho-D-ribosyl)imidazole from N(2)-formyl-N(1)-(5-phospho-D-ribosyl)glycinamide: step 1/2. Functionally, part of the phosphoribosylformylglycinamidine synthase complex involved in the purines biosynthetic pathway. Catalyzes the ATP-dependent conversion of formylglycinamide ribonucleotide (FGAR) and glutamine to yield formylglycinamidine ribonucleotide (FGAM) and glutamate. The FGAM synthase complex is composed of three subunits. PurQ produces an ammonia molecule by converting glutamine to glutamate. PurL transfers the ammonia molecule to FGAR to form FGAM in an ATP-dependent manner. PurS interacts with PurQ and PurL and is thought to assist in the transfer of the ammonia molecule from PurQ to PurL. In Leptospira interrogans serogroup Icterohaemorrhagiae serovar Lai (strain 56601), this protein is Phosphoribosylformylglycinamidine synthase subunit PurL.